An 849-amino-acid polypeptide reads, in one-letter code: G-type lectin S-receptor-like serine/threonine-protein kinase At4g11900 (849 aa).

An N-terminal signal peptide occupies residues 1–26 (MQICKKNVFLLYYGVLVFLSFQVSSS). Residues 27–180 (TDTISTNQPL…PNSSAAVLWQ (154 aa)) enclose the Bulb-type lectin domain. Residues 27-466 (TDTISTNQPL…RKTEHSKGKS (440 aa)) are Extracellular-facing. N-linked (GlcNAc...) asparagine glycosylation is found at asparagine 111, asparagine 148, asparagine 172, and asparagine 232. The EGF-like domain occupies 311-348 (PDNRCDVYNSCGSFGICNENREPPPCRCVPGFKREFSQ). Intrachain disulfides connect cysteine 315–cysteine 327, cysteine 321–cysteine 336, cysteine 401–cysteine 421, and cysteine 405–cysteine 411. A PAN domain is found at 368 to 447 (CYKRNDEFLP…KGHTFFLRLA (80 aa)). Residue asparagine 450 is glycosylated (N-linked (GlcNAc...) asparagine). A helical membrane pass occupies residues 467-487 (IVLPLVLASLVATAACFVGLY). The Cytoplasmic segment spans residues 488-849 (CCISSRIRRK…EATQTELEAR (362 aa)). The region spanning 537–822 (FSRKKKLGEG…TLPIPKQPTF (286 aa)) is the Protein kinase domain. Residues 543-551 (LGEGGFGPV) and lysine 565 contribute to the ATP site. Position 571 is a phosphoserine (serine 571). The segment at 626–643 (LKSRELDWETRMKIVNGT) is caM-binding. The active-site Proton acceptor is the aspartate 662. Serine 666 and serine 679 each carry phosphoserine. Residue threonine 696 is modified to Phosphothreonine. Serine 837 bears the Phosphoserine mark. Threonine 844 is modified (phosphothreonine).

Belongs to the protein kinase superfamily. Ser/Thr protein kinase family.

The protein localises to the cell membrane. The catalysed reaction is L-seryl-[protein] + ATP = O-phospho-L-seryl-[protein] + ADP + H(+). It carries out the reaction L-threonyl-[protein] + ATP = O-phospho-L-threonyl-[protein] + ADP + H(+). The sequence is that of G-type lectin S-receptor-like serine/threonine-protein kinase At4g11900 from Arabidopsis thaliana (Mouse-ear cress).